Consider the following 205-residue polypeptide: Ribosomal RNA large subunit methyltransferase E (205 aa).

Residues G60, W62, D80, D96, and D121 each coordinate S-adenosyl-L-methionine. K161 acts as the Proton acceptor in catalysis.

This sequence belongs to the class I-like SAM-binding methyltransferase superfamily. RNA methyltransferase RlmE family.

It localises to the cytoplasm. It catalyses the reaction uridine(2552) in 23S rRNA + S-adenosyl-L-methionine = 2'-O-methyluridine(2552) in 23S rRNA + S-adenosyl-L-homocysteine + H(+). Functionally, specifically methylates the uridine in position 2552 of 23S rRNA at the 2'-O position of the ribose in the fully assembled 50S ribosomal subunit. This chain is Ribosomal RNA large subunit methyltransferase E, found in Azoarcus sp. (strain BH72).